The primary structure comprises 316 residues: Annexin D5 (316 aa).

Position 2 is an N-acetylalanine (A2). Annexin repeat units lie at residues 11-82 (PSPR…LWMP), 83-154 (EAVE…AYLN), 166-238 (ASVE…TILQ), and 242-313 (NSCF…SLLG). F24, G26, G28, and E68 together coordinate Ca(2+). S95 carries the phosphoserine modification. T112 bears the Phosphothreonine mark. G259 provides a ligand contact to Ca(2+). Y284 is subject to Phosphotyrosine. Ca(2+)-binding residues include D299 and T300.

It belongs to the annexin (TC 1.A.31.1) family. In terms of tissue distribution, expressed mainly in roots and flowers. Lower in stems and leaves.

This Arabidopsis thaliana (Mouse-ear cress) protein is Annexin D5 (ANN5).